A 213-amino-acid polypeptide reads, in one-letter code: Holliday junction resolvase RecU (213 aa).

The Mg(2+) site is built by Thr99, Asp101, Glu114, and Gln133.

It belongs to the RecU family. It depends on Mg(2+) as a cofactor.

Its subcellular location is the cytoplasm. The enzyme catalyses Endonucleolytic cleavage at a junction such as a reciprocal single-stranded crossover between two homologous DNA duplexes (Holliday junction).. Its function is as follows. Endonuclease that resolves Holliday junction intermediates in genetic recombination. Cleaves mobile four-strand junctions by introducing symmetrical nicks in paired strands. Promotes annealing of linear ssDNA with homologous dsDNA. Required for DNA repair, homologous recombination and chromosome segregation. This is Holliday junction resolvase RecU from Lactococcus lactis subsp. cremoris (strain SK11).